Consider the following 128-residue polypeptide: KRAB domain-containing protein 1 (128 aa).

In terms of domain architecture, KRAB spans 15 to 86; the sequence is VAFEDVAVYF…QPQGVLSRND (72 aa).

The sequence is that of KRAB domain-containing protein 1 (KRBOX1) from Homo sapiens (Human).